The following is a 425-amino-acid chain: Transmembrane protein 184A (425 aa).

Helical transmembrane passes span 51-71, 96-116, 133-153, 189-209, 226-246, 261-281, and 303-323; these read LFLT…TALL, LLFI…LLGG, FVIY…SAIM, TLQF…LQAF, VTLV…LFYF, FLTI…LAIL, and LAAG…SLAL. The disordered stretch occupies residues 375–425; the sequence is QYTQQSTHEAPGPGQGGHPSPSTHPGPASGSGGGKKSRNIEKRMLIPSEDL. Low complexity predominate over residues 392–402; it reads HPSPSTHPGPA.

This sequence belongs to the TMEM184 family. Expressed in vascular cells (at protein level).

The protein resides in the cell membrane. Its subcellular location is the cytoplasm. It localises to the perinuclear region. It is found in the early endosome membrane. The protein localises to the endosome. The protein resides in the cytoplasmic vesicle. Its subcellular location is the secretory vesicle membrane. It localises to the cytoplasmic vesicle membrane. Its function is as follows. Acts as a heparin receptor in vascular cells. May be involved in vesicle transport in exocrine cells and Sertoli cells. The sequence is that of Transmembrane protein 184A (Tmem184a) from Rattus norvegicus (Rat).